The sequence spans 657 residues: Wall-associated receptor kinase-like 20 (657 aa).

The signal sequence occupies residues 1-23 (MEKKRSYYALLIPTLLTVWLACA). Topologically, residues 24–293 (GHSCARHAKA…KHCKKKKKTV (270 aa)) are extracellular. N-linked (GlcNAc...) asparagine glycosylation occurs at N140. Residues 294–314 (VFAGAAVAVVGVTLAIAVAVI) traverse the membrane as a helical segment. At 315–657 (GTKHSHQKVK…NILSQEVTET (343 aa)) the chain is on the cytoplasmic side. One can recognise a Protein kinase domain in the interval 363-646 (FSKDNLIGTG…KEVADEIEYI (284 aa)). Residues 369 to 377 (IGTGGFGEV) and K391 each bind ATP. D490 functions as the Proton acceptor in the catalytic mechanism.

This sequence belongs to the protein kinase superfamily. Ser/Thr protein kinase family.

The protein resides in the membrane. It catalyses the reaction L-seryl-[protein] + ATP = O-phospho-L-seryl-[protein] + ADP + H(+). It carries out the reaction L-threonyl-[protein] + ATP = O-phospho-L-threonyl-[protein] + ADP + H(+). Serine/threonine-protein kinase that may function as a signaling receptor of extracellular matrix component. This chain is Wall-associated receptor kinase-like 20 (WAKL20), found in Arabidopsis thaliana (Mouse-ear cress).